The primary structure comprises 678 residues: MDILIFVTAAAHLVYTPFTKVEESFNLQAMHDILYLRNNFTQYDHHDYPGVVPRTFIGPLVVSIISAPFVLLFETLSINKFWAQYVVRLVLAGAISVAWNSLRQAVTKIYGVEVRLWFTAITITQFHFMFYMTRPLPNIFALPIVLFAIAYWLRDQHKPFIICSGISILVFRSELALFLGILLVVSLLRRKVSIDGLLKVALPAGVCILAATVLVDSFFWRRLLWPEGEVLWYNTVLNKSSNWGTSPFLWYFYSALPRAMGASLVLVPIGVALEPRIRPLVLSALLFVLLYSILPHKELRFIIYVFPVLNIAAACACQRIWMNSAKSTWHSFLALACGAHLLLNVFITLFLLVISGTNYPGGAALSRLHRLEAGTSNVSVHISNLAAQSGVSRFMEINNEWTYSKDETMNYTQADLVAYTHLLVEAKNKQNTELWASLQNEFDTLEFIDCFNSIGIQYNSLLPVRIKTKPCIGILKKRPVAPKEASKTKEKIAKTKTYPVEKETLLAPVKEFPKVIGDPKMKSRLQVDADDDDGIVSTVEEMSLELETDTEPHAGAETIETPLKEINFQELRTLALGQATKKSRAATKMKIRQIIEQHYRAKGKQIENDSAETQKTQGKAGLRQSVKSIIKQEKIKEMIEQIATMDLTRICDLERTSTKDCLKQVIDKIDDSEGLKSK.

11 helical membrane passes run 1-21 (MDIL…FTKV), 56-76 (FIGP…FETL), 81-101 (FWAQ…AWNS), 109-129 (IYGV…FHFM), 133-153 (TRPL…AYWL), 168-188 (ILVF…VSLL), 200-220 (VALP…SFFW), 252-272 (FYSA…IGVA), 279-299 (PLVL…HKEL), 301-321 (FIIY…QRIW), and 334-354 (ALAC…LLVI).

It belongs to the glycosyltransferase 22 family.

Its subcellular location is the endoplasmic reticulum membrane. It catalyses the reaction an alpha-D-Man-(1-&gt;2)-alpha-D-Man-(1-&gt;2)-alpha-D-Man-(1-&gt;3)-[alpha-D-Man-(1-&gt;2)-alpha-D-Man-(1-&gt;3)-alpha-D-Man-(1-&gt;6)]-beta-D-Man-(1-&gt;4)-beta-D-GlcNAc-(1-&gt;4)-alpha-D-GlcNAc-diphospho-di-trans,poly-cis-dolichol + a di-trans,poly-cis-dolichyl beta-D-mannosyl phosphate = an alpha-D-Man-(1-&gt;2)-alpha-D-Man-(1-&gt;2)-alpha-D-Man-(1-&gt;3)-[alpha-D-Man-(1-&gt;2)-alpha-D-Man-(1-&gt;3)-[alpha-D-Man-(1-&gt;6)]-alpha-D-Man-(1-&gt;6)]-beta-D-Man-(1-&gt;4)-beta-D-GlcNAc-(1-&gt;4)-alpha-D-GlcNAc-diphospho-di-trans,poly-cis-dolichol + a di-trans,poly-cis-dolichyl phosphate + H(+). It functions in the pathway protein modification; protein glycosylation. Mannosyltransferase that operates in the biosynthetic pathway of dolichol-linked oligosaccharides, the glycan precursors employed in protein asparagine (N)-glycosylation. The assembly of dolichol-linked oligosaccharides begins on the cytosolic side of the endoplasmic reticulum membrane and finishes in its lumen. The sequential addition of sugars to dolichol pyrophosphate produces dolichol-linked oligosaccharides containing fourteen sugars, including two GlcNAcs, nine mannoses and three glucoses. Once assembled, the oligosaccharide is transferred from the lipid to nascent proteins by oligosaccharyltransferases. In the lumen of the endoplasmic reticulum, adds the eighth mannose residue in an alpha-1,6 linkage onto Man(7)GlcNAc(2)-PP-dolichol to produce Man(8)GlcNAc(2)-PP-dolichol. This is Dol-P-Man:Man(7)GlcNAc(2)-PP-Dol alpha-1,6-mannosyltransferase from Drosophila melanogaster (Fruit fly).